Consider the following 266-residue polypeptide: Undecaprenyl-diphosphatase (266 aa).

The next 8 membrane-spanning stretches (helical) occupy residues M1–I21, Q39–F59, W87–I107, L111–A131, A149–A169, A183–V203, A218–L238, and M246–L266.

It belongs to the UppP family.

The protein localises to the cell inner membrane. It carries out the reaction di-trans,octa-cis-undecaprenyl diphosphate + H2O = di-trans,octa-cis-undecaprenyl phosphate + phosphate + H(+). Functionally, catalyzes the dephosphorylation of undecaprenyl diphosphate (UPP). Confers resistance to bacitracin. The protein is Undecaprenyl-diphosphatase of Shewanella putrefaciens (strain CN-32 / ATCC BAA-453).